The chain runs to 245 residues: tRNA (guanine-N(7)-)-methyltransferase (245 aa).

S-adenosyl-L-methionine contacts are provided by residues glycine 70, 93–94 (EI), 126–127 (NA), and leucine 146. Aspartate 149 is an active-site residue. Residue 224–226 (SEE) coordinates S-adenosyl-L-methionine.

This sequence belongs to the class I-like SAM-binding methyltransferase superfamily. TrmB family.

The protein localises to the nucleus. It catalyses the reaction guanosine(46) in tRNA + S-adenosyl-L-methionine = N(7)-methylguanosine(46) in tRNA + S-adenosyl-L-homocysteine. Its pathway is tRNA modification; N(7)-methylguanine-tRNA biosynthesis. Its function is as follows. Catalyzes the formation of N(7)-methylguanine at position 46 (m7G46) in tRNA. This Aedes aegypti (Yellowfever mosquito) protein is tRNA (guanine-N(7)-)-methyltransferase.